Here is a 330-residue protein sequence, read N- to C-terminus: (11Z)-hexadec-11-enoyl-CoA conjugase (330 aa).

The next 2 membrane-spanning stretches (helical) occupy residues 37–57 (IVVM…YGLY) and 65–85 (LATS…ITAG). Positions 87-92 (HRLWSH) match the Histidine box-1 motif. A helical membrane pass occupies residues 101 to 121 (LEILLMVFNSIAFQNTIFTWV). A Histidine box-2 motif is present at residues 124–128 (HRLHH). A run of 2 helical transmembrane segments spans residues 185–205 (AIPF…MYFW) and 216–238 (TVLR…HLWG). The short motif at 264–268 (HNYHH) is the Histidine box-3 element.

It belongs to the fatty acid desaturase type 1 family. It depends on Fe(2+) as a cofactor. In terms of tissue distribution, highly expressed in the pheromone gland.

It is found in the membrane. It catalyses the reaction an 11,12-saturated fatty acyl-CoA + 2 Fe(II)-[cytochrome b5] + O2 + 2 H(+) = an (11Z)-Delta(11)-fatty acyl-CoA + 2 Fe(III)-[cytochrome b5] + 2 H2O. The enzyme catalyses (11Z)-hexadecenoyl-CoA + AH2 + O2 = (10E,12Z)-hexadecadienoyl-CoA + A + 2 H2O. In terms of biological role, fatty acid desaturase that catalyzes 2 consecutive steps in the biosynthesis of bombykol, a sex pheromone produced by the moth. First acts as an acyl-CoA Delta(11) desaturase (1) by catalyzing the formation of Delta(11) fatty acyl precursors. Then acts as a (11Z)-hexadec-11-enoyl-CoA conjugase (2) by converting a single cis double bond at position 11 of (11Z)-hexadec-11-enoyl-CoA into conjugated 10 trans and 12 cis double bonds. The sequence is that of (11Z)-hexadec-11-enoyl-CoA conjugase from Bombyx mori (Silk moth).